We begin with the raw amino-acid sequence, 1361 residues long: DNA-directed RNA polymerase subunit beta (1361 aa).

It belongs to the RNA polymerase beta chain family. As to quaternary structure, the RNAP catalytic core consists of 2 alpha, 1 beta, 1 beta' and 1 omega subunit. When a sigma factor is associated with the core the holoenzyme is formed, which can initiate transcription.

It carries out the reaction RNA(n) + a ribonucleoside 5'-triphosphate = RNA(n+1) + diphosphate. In terms of biological role, DNA-dependent RNA polymerase catalyzes the transcription of DNA into RNA using the four ribonucleoside triphosphates as substrates. The sequence is that of DNA-directed RNA polymerase subunit beta from Cellvibrio japonicus (strain Ueda107) (Pseudomonas fluorescens subsp. cellulosa).